Consider the following 317-residue polypeptide: Trem-like transcript 1 protein (317 aa).

The N-terminal stretch at 1–20 (MDCYLLLLLLLLGLAGQGSA) is a signal peptide. One can recognise an Ig-like V-type domain in the interval 21 to 122 (DSHPEVLQAP…PQTLHRVSLL (102 aa)). The Extracellular segment spans residues 21–175 (DSHPEVLQAP…EFRRRENSIP (155 aa)). Cystine bridges form between Cys-39–Cys-105 and Cys-53–Cys-60. The disordered stretch occupies residues 147 to 166 (TGSLLEDPSLDPSASAGPHE). A helical transmembrane segment spans residues 176–196 (LIWGAVLLLALVVVAVVIFAV). At 197 to 317 (MARKKGNRLV…PPNSQTPPSK (121 aa)) the chain is on the cytoplasmic side. Residue Cys-208 is the site of S-palmitoyl cysteine attachment. Residues 212–278 (QSTGVPGMDP…SQPPLPPKVL (67 aa)) are disordered. The span at 261–275 (SSEPPAPPSQPPLPP) shows a compositional bias: pro residues. Residue Ser-283 is modified to Phosphoserine. The short motif at 284–289 (VTYATV) is the ITIM element. The disordered stretch occupies residues 295 to 317 (DKGKIASCEPVQDPPNSQTPPSK). A compositionally biased stretch (polar residues) spans 308–317 (PPNSQTPPSK).

In terms of assembly, when phosphorylated, interacts with PTPN11. When phosphorylated, interacts with PTPN6. Phosphorylated on tyrosine residues. In terms of tissue distribution, highly expressed in bone marrow leukocytes, splenic megakaryocytes and platelets. Detected in brain, liver and in peritoneal monocytes.

Its subcellular location is the cell membrane. The protein localises to the cytoplasm. Functionally, cell surface receptor that may play a role in the innate and adaptive immune response. The protein is Trem-like transcript 1 protein (Treml1) of Mus musculus (Mouse).